The sequence spans 409 residues: Probable tRNA N6-adenosine threonylcarbamoyltransferase, mitochondrial (409 aa).

A mitochondrion-targeting transit peptide spans 1 to 31 (MHALRNFAGNGIANVFGCGIRRRLSYVLGIE). Positions 135 and 139 each coordinate a divalent metal cation. Substrate contacts are provided by residues 159–163 (LASGG), aspartate 192, glycine 212, glutamate 216, 322–323 (NN), and serine 350. Residue aspartate 351 participates in a divalent metal cation binding.

The protein belongs to the KAE1 / TsaD family. Homodimer. Requires a divalent metal cation as cofactor.

It localises to the mitochondrion. It catalyses the reaction L-threonylcarbamoyladenylate + adenosine(37) in tRNA = N(6)-L-threonylcarbamoyladenosine(37) in tRNA + AMP + H(+). In terms of biological role, required for the formation of a threonylcarbamoyl group on adenosine at position 37 (t(6)A37) in mitochondrial tRNAs that read codons beginning with adenine. Probably involved in the transfer of the threonylcarbamoyl moiety of threonylcarbamoyl-AMP (TC-AMP) to the N6 group of A37. Involved in mitochondrial genome maintenance. The chain is Probable tRNA N6-adenosine threonylcarbamoyltransferase, mitochondrial from Drosophila melanogaster (Fruit fly).